Reading from the N-terminus, the 354-residue chain is Elongation factor Ts (354 aa).

Residues 81–84 (TDFV) are involved in Mg(2+) ion dislocation from EF-Tu.

Belongs to the EF-Ts family.

It localises to the cytoplasm. Functionally, associates with the EF-Tu.GDP complex and induces the exchange of GDP to GTP. It remains bound to the aminoacyl-tRNA.EF-Tu.GTP complex up to the GTP hydrolysis stage on the ribosome. This chain is Elongation factor Ts, found in Campylobacter curvus (strain 525.92).